The primary structure comprises 465 residues: Probable glycine dehydrogenase (decarboxylating) subunit 1 (465 aa).

The protein belongs to the GcvP family. N-terminal subunit subfamily. As to quaternary structure, the glycine cleavage system is composed of four proteins: P, T, L and H. In this organism, the P 'protein' is a heterodimer of two subunits.

It carries out the reaction N(6)-[(R)-lipoyl]-L-lysyl-[glycine-cleavage complex H protein] + glycine + H(+) = N(6)-[(R)-S(8)-aminomethyldihydrolipoyl]-L-lysyl-[glycine-cleavage complex H protein] + CO2. Its function is as follows. The glycine cleavage system catalyzes the degradation of glycine. The P protein binds the alpha-amino group of glycine through its pyridoxal phosphate cofactor; CO(2) is released and the remaining methylamine moiety is then transferred to the lipoamide cofactor of the H protein. The protein is Probable glycine dehydrogenase (decarboxylating) subunit 1 of Aeropyrum pernix (strain ATCC 700893 / DSM 11879 / JCM 9820 / NBRC 100138 / K1).